The sequence spans 466 residues: Paraneoplastic antigen Ma3 homolog (466 aa).

Positions 379-408 are disordered; that stretch reads RPYQGSRRRRHRRRGQHRKGGVPRDDSQGT. The segment covering 384-399 has biased composition (basic residues); the sequence is SRRRRHRRRGQHRKGG. The CCHC-type zinc-finger motif lies at 415–432; it reads TFCYSCGEDGHIRVHCFN. Residues 441–466 form a disordered region; it reads QKRQAAMEKGNRSWAWEKSHPKPKTK. A compositionally biased stretch (basic and acidic residues) spans 445 to 460; sequence AAMEKGNRSWAWEKSH.

This sequence belongs to the PNMA family. Expressed in the cerebrum and cerebellum.

It localises to the nucleus. It is found in the nucleolus. The protein is Paraneoplastic antigen Ma3 homolog (Pnma3) of Mus musculus (Mouse).